Reading from the N-terminus, the 318-residue chain is Aspartate carbamoyltransferase catalytic subunit (318 aa).

Arginine 58 and threonine 59 together coordinate carbamoyl phosphate. Residue lysine 86 coordinates L-aspartate. Carbamoyl phosphate-binding residues include arginine 108, histidine 141, and glutamine 144. Positions 174 and 226 each coordinate L-aspartate. Positions 270 and 271 each coordinate carbamoyl phosphate.

This sequence belongs to the aspartate/ornithine carbamoyltransferase superfamily. ATCase family. As to quaternary structure, heterododecamer (2C3:3R2) of six catalytic PyrB chains organized as two trimers (C3), and six regulatory PyrI chains organized as three dimers (R2).

It carries out the reaction carbamoyl phosphate + L-aspartate = N-carbamoyl-L-aspartate + phosphate + H(+). It participates in pyrimidine metabolism; UMP biosynthesis via de novo pathway; (S)-dihydroorotate from bicarbonate: step 2/3. Functionally, catalyzes the condensation of carbamoyl phosphate and aspartate to form carbamoyl aspartate and inorganic phosphate, the committed step in the de novo pyrimidine nucleotide biosynthesis pathway. This Lactobacillus gasseri (strain ATCC 33323 / DSM 20243 / BCRC 14619 / CIP 102991 / JCM 1131 / KCTC 3163 / NCIMB 11718 / NCTC 13722 / AM63) protein is Aspartate carbamoyltransferase catalytic subunit.